The following is a 702-amino-acid chain: MA3 DOMAIN-CONTAINING TRANSLATION REGULATORY FACTOR 1 (702 aa).

Residues 39 to 66 (LNIKSPTGGKGPVAGIPNRHVRRTHSGK) are disordered. Residues 57–66 (RHVRRTHSGK) are compositionally biased toward basic residues. An MI 1 domain is found at 122–243 (DYKKSVVSII…PPVFLVRSKK (122 aa)). Positions 273 to 280 (EKKWGGST) match the Nuclear localization signal 1 motif. MI domains follow at residues 286–407 (ETKK…TSDQ), 420–541 (QYKK…DIST), and 583–702 (DAKD…SATQ). The Nuclear localization signal 2 motif lies at 458-465 (LKRLITLA).

Belongs to the PDCD4 family. In terms of assembly, binds to EIF4A1, S6K1 and S6K2. The association with ribosomes is modulated by cellular energy status and TOR activity. In terms of processing, phosphorylation by S6 kinases (e.g. S6K1 and S6K2) is modulated by cellular energy status and TOR activity. Mostly expressed in vegetative tissues, such as leaves, roots and stems, and, to a lower extent, in reproductive tissues, such as flower buds and flowers.

Its subcellular location is the nucleus. It is found in the cytoplasm. The protein resides in the cytosol. Functionally, involved in target of rapamycin (TOR)-regulated translation control, especially under energy-deficient conditions. The sequence is that of MA3 DOMAIN-CONTAINING TRANSLATION REGULATORY FACTOR 1 from Arabidopsis thaliana (Mouse-ear cress).